A 56-amino-acid polypeptide reads, in one-letter code: UPF0434 protein CbuK_1382 (56 aa).

It belongs to the UPF0434 family.

The chain is UPF0434 protein CbuK_1382 from Coxiella burnetii (strain CbuK_Q154) (Coxiella burnetii (strain Q154)).